The primary structure comprises 1155 residues: Polarized growth protein rax2 (1155 aa).

The N-terminal stretch at Met-1 to Ala-27 is a signal peptide. Over Ser-28–Tyr-1105 the chain is Extracellular. 38 N-linked (GlcNAc...) asparagine glycosylation sites follow: Asn-44, Asn-61, Asn-103, Asn-118, Asn-124, Asn-156, Asn-161, Asn-182, Asn-190, Asn-213, Asn-224, Asn-306, Asn-391, Asn-413, Asn-419, Asn-510, Asn-519, Asn-554, Asn-562, Asn-607, Asn-630, Asn-713, Asn-722, Asn-743, Asn-769, Asn-793, Asn-807, Asn-824, Asn-840, Asn-848, Asn-876, Asn-893, Asn-899, Asn-916, Asn-945, Asn-1009, Asn-1030, and Asn-1055. A helical membrane pass occupies residues Val-1106–Ile-1126. Residues Val-1127–Gln-1155 are Cytoplasmic-facing.

It belongs to the RAX2 family. Interacts with for3 and tea1.

Its subcellular location is the cell membrane. Controls cell polarity, through the G1 phase of mitosis, via regulation of for3 localization. Required for actin cable formation where it directs the spatial distribution of the actin cables. The protein is Polarized growth protein rax2 of Schizosaccharomyces pombe (strain 972 / ATCC 24843) (Fission yeast).